A 482-amino-acid chain; its full sequence is Matrix metalloproteinase-20 (482 aa).

Positions 1 to 21 are cleaved as a signal peptide; sequence MKVLPASGLAVLVTALKFATA. Residues 22–106 constitute a propeptide that is removed on maturation; it reads DPNLLAATPR…PRCGVPDVAN (85 aa). The Cysteine switch signature appears at 97-104; sequence PRCGVPDV. Residue C99 participates in Zn(2+) binding. Ca(2+) contacts are provided by E163, A164, and D165. The Zn(2+) site is built by H175 and D177. D182, G183, R185, and T187 together coordinate Ca(2+). Position 190 (H190) interacts with Zn(2+). E196, G197, G199, and D201 together coordinate Ca(2+). H203 is a binding site for Zn(2+). Ca(2+) contacts are provided by D205 and E208. Residue H225 participates in Zn(2+) binding. Residue E226 is part of the active site. The Zn(2+) site is built by H229 and H235. 4 Hemopexin repeats span residues 292-342, 343-388, 390-438, and 439-482; these read PDLC…FPQL, MSNV…GFPR, VQRI…FSGV, and SGHI…WIGC. C295 and C482 are disulfide-bonded.

The protein belongs to the peptidase M10A family. It depends on Zn(2+) as a cofactor. The cofactor is Ca(2+). Autoactivates at least at the 106-Asn-|-Tyr-107 site. Expressed in the enamel organ.

The protein resides in the secreted. The protein localises to the extracellular space. Its subcellular location is the extracellular matrix. Its function is as follows. Degrades amelogenin, the major protein component of the enamel matrix and two of the macromolecules characterizing the cartilage extracellular matrix: aggrecan and the cartilage oligomeric matrix protein (COMP). May play a central role in tooth enamel formation. Cleaves aggrecan at the '360-Asn-|-Phe-361' site. This chain is Matrix metalloproteinase-20 (Mmp20), found in Mus musculus (Mouse).